We begin with the raw amino-acid sequence, 192 residues long: Capsid protein (192 aa).

The tract at residues 1-30 (MEDSQPIKVRQPSISAPGTHLSPNPGQQSP) is disordered. A compositionally biased stretch (polar residues) spans 12–30 (PSISAPGTHLSPNPGQQSP).

It belongs to the tymoviruses capsid protein family.

The protein localises to the virion. Its function is as follows. Self-assembles to form a T=3 icosahedral capsid composed of 180 copies of the capsid protein. The capsid encapsulates the single-stranded RNA genome. The polypeptide is Capsid protein (Ononis).